The primary structure comprises 404 residues: 8-amino-7-oxononanoate synthase (404 aa).

A substrate-binding site is contributed by arginine 20. A pyridoxal 5'-phosphate-binding site is contributed by 116–117 (GY). Position 141 (histidine 141) interacts with substrate. Pyridoxal 5'-phosphate contacts are provided by serine 187, histidine 215, and threonine 243. Lysine 246 bears the N6-(pyridoxal phosphate)lysine mark. Threonine 366 lines the substrate pocket.

The protein belongs to the class-II pyridoxal-phosphate-dependent aminotransferase family. BioF subfamily. In terms of assembly, homodimer. The cofactor is pyridoxal 5'-phosphate.

The catalysed reaction is 6-carboxyhexanoyl-[ACP] + L-alanine + H(+) = (8S)-8-amino-7-oxononanoate + holo-[ACP] + CO2. It participates in cofactor biosynthesis; biotin biosynthesis. Functionally, catalyzes the decarboxylative condensation of pimeloyl-[acyl-carrier protein] and L-alanine to produce 8-amino-7-oxononanoate (AON), [acyl-carrier protein], and carbon dioxide. This chain is 8-amino-7-oxononanoate synthase, found in Cupriavidus taiwanensis (strain DSM 17343 / BCRC 17206 / CCUG 44338 / CIP 107171 / LMG 19424 / R1) (Ralstonia taiwanensis (strain LMG 19424)).